The following is an 81-amino-acid chain: MRKLALVPIQFYRYAISPLMANHCRFFPSCSCYAYEAIENHGIWRGGWLAVRRLGRCHPWNDGGYDPVPPAPSSRTSSIAE.

Residues asparagine 61 to glutamate 81 form a disordered region.

The protein belongs to the UPF0161 family.

The protein resides in the cell inner membrane. Could be involved in insertion of integral membrane proteins into the membrane. The protein is Putative membrane protein insertion efficiency factor of Pseudomonas putida (strain ATCC 47054 / DSM 6125 / CFBP 8728 / NCIMB 11950 / KT2440).